We begin with the raw amino-acid sequence, 202 residues long: Imidazoleglycerol-phosphate dehydratase (202 aa).

Belongs to the imidazoleglycerol-phosphate dehydratase family.

Its subcellular location is the cytoplasm. The catalysed reaction is D-erythro-1-(imidazol-4-yl)glycerol 3-phosphate = 3-(imidazol-4-yl)-2-oxopropyl phosphate + H2O. The protein operates within amino-acid biosynthesis; L-histidine biosynthesis; L-histidine from 5-phospho-alpha-D-ribose 1-diphosphate: step 6/9. The sequence is that of Imidazoleglycerol-phosphate dehydratase from Brucella suis (strain ATCC 23445 / NCTC 10510).